The following is a 615-amino-acid chain: Dihydroxy-acid dehydratase (615 aa).

Asp81 contacts Mg(2+). Cys122 provides a ligand contact to [2Fe-2S] cluster. Mg(2+) is bound by residues Asp123 and Lys124. An N6-carboxylysine modification is found at Lys124. Cys195 is a binding site for [2Fe-2S] cluster. Glu491 lines the Mg(2+) pocket. Ser517 serves as the catalytic Proton acceptor.

The protein belongs to the IlvD/Edd family. Homodimer. The cofactor is [2Fe-2S] cluster. Mg(2+) is required as a cofactor.

The enzyme catalyses (2R)-2,3-dihydroxy-3-methylbutanoate = 3-methyl-2-oxobutanoate + H2O. It carries out the reaction (2R,3R)-2,3-dihydroxy-3-methylpentanoate = (S)-3-methyl-2-oxopentanoate + H2O. It participates in amino-acid biosynthesis; L-isoleucine biosynthesis; L-isoleucine from 2-oxobutanoate: step 3/4. It functions in the pathway amino-acid biosynthesis; L-valine biosynthesis; L-valine from pyruvate: step 3/4. Its function is as follows. Functions in the biosynthesis of branched-chain amino acids. Catalyzes the dehydration of (2R,3R)-2,3-dihydroxy-3-methylpentanoate (2,3-dihydroxy-3-methylvalerate) into 2-oxo-3-methylpentanoate (2-oxo-3-methylvalerate) and of (2R)-2,3-dihydroxy-3-methylbutanoate (2,3-dihydroxyisovalerate) into 2-oxo-3-methylbutanoate (2-oxoisovalerate), the penultimate precursor to L-isoleucine and L-valine, respectively. In Pseudoalteromonas atlantica (strain T6c / ATCC BAA-1087), this protein is Dihydroxy-acid dehydratase.